The primary structure comprises 507 residues: ATP synthase subunit alpha, chloroplastic (507 aa).

Position 170–177 (170–177 (GDRQTGKT)) interacts with ATP.

Belongs to the ATPase alpha/beta chains family. F-type ATPases have 2 components, CF(1) - the catalytic core - and CF(0) - the membrane proton channel. CF(1) has five subunits: alpha(3), beta(3), gamma(1), delta(1), epsilon(1). CF(0) has four main subunits: a, b, b' and c.

It localises to the plastid. The protein localises to the chloroplast thylakoid membrane. It catalyses the reaction ATP + H2O + 4 H(+)(in) = ADP + phosphate + 5 H(+)(out). In terms of biological role, produces ATP from ADP in the presence of a proton gradient across the membrane. The alpha chain is a regulatory subunit. The protein is ATP synthase subunit alpha, chloroplastic of Ceratophyllum demersum (Rigid hornwort).